We begin with the raw amino-acid sequence, 164 residues long: T-cell surface glycoprotein CD3 zeta chain (164 aa).

The signal sequence occupies residues 1–21 (MKWKALFTAAILQAQLPITEA). Residues 22 to 30 (QSFGLLDPK) lie on the Extracellular side of the membrane. The helical transmembrane segment at 31 to 51 (LCYLLDGILFIYGVILTALFL) threads the bilayer. At 52–164 (RVKFSRSADA…ALHMQALPPR (113 aa)) the chain is on the cytoplasmic side. S58 bears the Phosphoserine mark. 3 ITAM domains span residues 61–89 (APAY…LDKR), 100–128 (PQRR…EIGM), and 131–159 (ERRR…LHMQ). Phosphotyrosine occurs at positions 64, 72, 83, 111, 123, 142, and 153. Residues 83-96 (YDVLDKRRGRDPEM) are compositionally biased toward basic and acidic residues. The disordered stretch occupies residues 83 to 111 (YDVLDKRRGRDPEMGGKPQRRKNPQEGLY). Positions 128-154 (MKGERRRGKGHDGLYQGLSTATKDTYD) are disordered.

It belongs to the CD3Z/FCER1G family. As to quaternary structure, the TCR-CD3 complex is composed of a CD3D/CD3E and a CD3G/CD3E heterodimers that preferentially associate with TCRalpha and TCRbeta, respectively, to form TCRalpha/CD3E/CD3G and TCRbeta/CD3G/CD3E trimers. In turn, the hexamer interacts with CD3Z homodimer to form the TCR-CD3 complex. Alternatively, TCRalpha and TCRbeta can be replaced by TCRgamma and TCRdelta. Interacts with SLA. Interacts with TRAT1. Interacts with DOCK2. Interacts with SLA2. Interacts with SHB. Interacts with ZAP70. Interacts (tyrosine phosphorylated) with SHC1 (via SH2 domain). Interacts with PTPRC. Interacts with CRK; this interaction regulates CD3Z phosphorylation. Interacts (on T cell side) with CD81, ICAM1 and CD9 at immunological synapses between antigen-presenting cells and T cells. Interacts with CD160. Interacts with LY6E. The signaling subunit of immunoglobulin gamma (IgG) Fc receptor complex. As a homodimer or a heterodimer with FCER1G, associates with the ligand binding subunit FCGR3A (via transmembrane domain); this interaction is a prerequisite for Fc receptor complex expression on the cell surface. Interacts with CD5. In terms of assembly, (Microbial infection) Interacts with HIV-1 Nef; this interaction up-regulates the expression of the Fas ligand (FASLG) at the cell surface. (Microbial infection) Interacts with HIV-2 Nef protein; this interaction induces down-regulation of cell surface TCR/CD3 complexes. Phosphorylated on Tyr residues after T-cell receptor triggering by LCK in association with CD4/CD8. As to expression, CD3Z is expressed in normal lymphoid tissue and in peripheral blood mononuclear cells (PBMCs).

Its subcellular location is the cell membrane. Functionally, part of the TCR-CD3 complex present on T-lymphocyte cell surface that plays an essential role in adaptive immune response. When antigen presenting cells (APCs) activate T-cell receptor (TCR), TCR-mediated signals are transmitted across the cell membrane by the CD3 chains CD3D, CD3E, CD3G and CD3Z. All CD3 chains contain immunoreceptor tyrosine-based activation motifs (ITAMs) in their cytoplasmic domain. Upon TCR engagement, these motifs become phosphorylated by Src family protein tyrosine kinases LCK and FYN, resulting in the activation of downstream signaling pathways. CD3Z ITAMs phosphorylation creates multiple docking sites for the protein kinase ZAP70 leading to ZAP70 phosphorylation and its conversion into a catalytically active enzyme. Plays an important role in intrathymic T-cell differentiation. Additionally, participates in the activity-dependent synapse formation of retinal ganglion cells (RGCs) in both the retina and dorsal lateral geniculate nucleus (dLGN). This Homo sapiens (Human) protein is T-cell surface glycoprotein CD3 zeta chain (CD247).